The following is a 265-amino-acid chain: Putative carbamate hydrolase RutD (265 aa).

Positions 14-123 (PTLVLSSGLG…WSSPNPHSAR (110 aa)) constitute an AB hydrolase-1 domain.

It belongs to the AB hydrolase superfamily. Hydrolase RutD family.

It carries out the reaction carbamate + 2 H(+) = NH4(+) + CO2. Involved in pyrimidine catabolism. May facilitate the hydrolysis of carbamate, a reaction that can also occur spontaneously. The chain is Putative carbamate hydrolase RutD from Stutzerimonas stutzeri (strain A1501) (Pseudomonas stutzeri).